Reading from the N-terminus, the 418-residue chain is Serine hydroxymethyltransferase (418 aa).

(6S)-5,6,7,8-tetrahydrofolate contacts are provided by residues Leu-121 and 125–127 (GHL). At Lys-230 the chain carries N6-(pyridoxal phosphate)lysine. 355–357 (SPF) contributes to the (6S)-5,6,7,8-tetrahydrofolate binding site.

The protein belongs to the SHMT family. Homodimer. Pyridoxal 5'-phosphate serves as cofactor.

The protein localises to the cytoplasm. It carries out the reaction (6R)-5,10-methylene-5,6,7,8-tetrahydrofolate + glycine + H2O = (6S)-5,6,7,8-tetrahydrofolate + L-serine. It participates in one-carbon metabolism; tetrahydrofolate interconversion. Its pathway is amino-acid biosynthesis; glycine biosynthesis; glycine from L-serine: step 1/1. In terms of biological role, catalyzes the reversible interconversion of serine and glycine with tetrahydrofolate (THF) serving as the one-carbon carrier. This reaction serves as the major source of one-carbon groups required for the biosynthesis of purines, thymidylate, methionine, and other important biomolecules. Also exhibits THF-independent aldolase activity toward beta-hydroxyamino acids, producing glycine and aldehydes, via a retro-aldol mechanism. The polypeptide is Serine hydroxymethyltransferase (Streptococcus agalactiae serotype V (strain ATCC BAA-611 / 2603 V/R)).